We begin with the raw amino-acid sequence, 376 residues long: Rhodopsin (376 aa).

Residues 1–51 are Extracellular-facing; sequence MSLINEPSYSAYSWGGQGGYGNQTVVDKVLPEMLHLIDPHWYQFPPMNPLW. N22 is a glycosylation site (N-linked (GlcNAc...) asparagine). The chain crosses the membrane as a helical span at residues 52-76; the sequence is HGLLGFVIGCLGFVSVVGNGMVIYI. Over 77–88 the chain is Cytoplasmic; it reads FSTTKGLRTPSN. The chain crosses the membrane as a helical span at residues 89-113; sequence LLVVNLAFSDFLMMLSMSPPMVINC. The Extracellular portion of the chain corresponds to 114 to 128; that stretch reads YYETWVLGPFMCELY. Cysteines 125 and 202 form a disulfide. Residues 129 to 148 traverse the membrane as a helical segment; sequence ALLGSLFGCGSIWTMVMIAL. The Cytoplasmic portion of the chain corresponds to 149–167; it reads DRYNVIVKGLAAKPMTNKT. Residues 168 to 191 form a helical membrane-spanning segment; sequence AMLRILGIWAMSIAWTVFPLFGWN. Residues 192–215 lie on the Extracellular side of the membrane; sequence RYVPEGNMTACGTDYLNKEWVSRS. A glycan (N-linked (GlcNAc...) asparagine) is linked at N198. Residues 216-243 traverse the membrane as a helical segment; the sequence is YILVYSVFVYFLPLATIIYSYWFIVQAV. At 244-278 the chain is on the cytoplasmic side; sequence SAHEKQMREQAKKMNVASLRSAENANTSAECKLAK. A helical transmembrane segment spans residues 279–302; the sequence is VALMTISLWFFAWTPYLVTDFSGI. Over 303 to 309 the chain is Extracellular; the sequence is FEWGKIS. A helical membrane pass occupies residues 310 to 334; sequence PLATIWCSLFAKANAVYNPIVYGIS. N6-(retinylidene)lysine is present on K321. Over 335–376 the chain is Cytoplasmic; that stretch reads HPKYRAALNKKFPSLACASEPDDTASQASGATTVSDEKSASA. The tract at residues 353 to 376 is disordered; that stretch reads SEPDDTASQASGATTVSDEKSASA. Residues 358 to 368 show a composition bias toward polar residues; sequence TASQASGATTV.

It belongs to the G-protein coupled receptor 1 family. Opsin subfamily. Post-translationally, phosphorylated on some or all of the serine and threonine residues present in the C-terminal region.

It is found in the membrane. Visual pigments are the light-absorbing molecules that mediate vision. They consist of an apoprotein, opsin, covalently linked to cis-retinal. This is Rhodopsin from Sphodromantis sp. (Mantis).